We begin with the raw amino-acid sequence, 347 residues long: UDP-3-O-acylglucosamine N-acyltransferase 1 (347 aa).

Catalysis depends on histidine 246, which acts as the Proton acceptor.

It belongs to the transferase hexapeptide repeat family. LpxD subfamily. As to quaternary structure, homotrimer.

It carries out the reaction a UDP-3-O-[(3R)-3-hydroxyacyl]-alpha-D-glucosamine + a (3R)-hydroxyacyl-[ACP] = a UDP-2-N,3-O-bis[(3R)-3-hydroxyacyl]-alpha-D-glucosamine + holo-[ACP] + H(+). Its pathway is bacterial outer membrane biogenesis; LPS lipid A biosynthesis. Its function is as follows. Catalyzes the N-acylation of UDP-3-O-acylglucosamine using 3-hydroxyacyl-ACP as the acyl donor. Is involved in the biosynthesis of lipid A, a phosphorylated glycolipid that anchors the lipopolysaccharide to the outer membrane of the cell. This chain is UDP-3-O-acylglucosamine N-acyltransferase 1, found in Francisella tularensis subsp. holarctica (strain LVS).